The following is a 418-amino-acid chain: FXa-directed anticoagulant (418 aa).

The first 19 residues, 1 to 19 (MNLKIAIIVICQLVYFTQG), serve as a signal peptide directing secretion. N-linked (GlcNAc...) asparagine glycans are attached at residues N117, N167, and N286.

It belongs to the serpin family. In terms of assembly, interacts with host coagulation factor X/F10 (activated). As to expression, female salivary gland (at protein level).

Its subcellular location is the secreted. In terms of biological role, anticoagulant and antithrombotic serpin-type protein inhibiting host coagulation factor Xa (F10). Does not inhibit host uPA/urokinase-type plasminogen activator (PLAU), kallikrein, granzyme B (GZMB), matriptase, elastase, alpha-chymotrypsin, chymase, coagulation factor XIIa (F12), coagulation factor XIa (F11), plasmin (PLG), thrombin (F2), trypsin and cathepsin G (CTSG). Inhibits factor Xa-induced production of pro-inflammatory cytokines, such as MCP-1/CCL2, TNF-alpha/TNF, IL-1beta/IL1B, IL6, IL8/CXCL8 and IL18, in human endothelial cells. Inhibits factor Xa-induced up-regulation of protease-activated receptors (PARs) F2R, F2RL1 and F2RL2 in human endothelial cells. Prevents activation of host F2RL1 via inhibition of F2RL1 cleavage by host factor Xa. Inhibits factor Xa-induced up-regulation of adhesion molecules ICAM1 and VCAM1 in human endothelial cells. Inhibits factor Xa-induced up-regulation of phosphorylated ERK1/2 in human endothelial cells. Inhibits factor Xa-induced activation of transcription factor NF-kappa-B in human endothelial cells. Reduces factor Xa-induced edema in the host. Reduces factor Xa-induced endothelial permeability in the host. In Aedes albopictus (Asian tiger mosquito), this protein is FXa-directed anticoagulant.